The chain runs to 522 residues: Probable mannosyltransferase KTR5 (522 aa).

The Cytoplasmic segment spans residues 1–16 (MLLIRRTINAFLGCIH). A helical; Signal-anchor for type II membrane protein transmembrane segment spans residues 17-37 (CNLTATCILIAFVITMYVVLV). The stem region stretch occupies residues 38–82 (SEPASVDGTMGNFLPFSKMDLATKRDRPFYSNCVNTQDYLLNPSY). The Lumenal portion of the chain corresponds to 38–522 (SEPASVDGTM…REDYLRQFGN (485 aa)). The catalytic stretch occupies residues 83–522 (IKQNASFVML…REDYLRQFGN (440 aa)). Asn86 is a glycosylation site (N-linked (GlcNAc...) asparagine). Glu363 acts as the Nucleophile in catalysis.

Belongs to the glycosyltransferase 15 family.

The protein resides in the membrane. In terms of biological role, possible glycosyltransferase that transfers an alpha-D-mannosyl residue from GDP-mannose into lipid-linked oligosaccharide, forming an alpha-(1-&gt;2)-D-mannosyl-D-mannose linkage. In Saccharomyces cerevisiae (strain ATCC 204508 / S288c) (Baker's yeast), this protein is Probable mannosyltransferase KTR5 (KTR5).